Here is a 369-residue protein sequence, read N- to C-terminus: tRNA pseudouridine synthase D (369 aa).

Residue D80 is the Nucleophile of the active site. Positions 156 to 318 constitute a TRUD domain; that stretch reads GIPNWFGEQR…LKQERRALRL (163 aa).

It belongs to the pseudouridine synthase TruD family.

The catalysed reaction is uridine(13) in tRNA = pseudouridine(13) in tRNA. Functionally, responsible for synthesis of pseudouridine from uracil-13 in transfer RNAs. In Xanthomonas axonopodis pv. citri (strain 306), this protein is tRNA pseudouridine synthase D.